The primary structure comprises 86 residues: Small ribosomal subunit protein uS17 (86 aa).

It belongs to the universal ribosomal protein uS17 family. Part of the 30S ribosomal subunit.

One of the primary rRNA binding proteins, it binds specifically to the 5'-end of 16S ribosomal RNA. The chain is Small ribosomal subunit protein uS17 from Roseiflexus castenholzii (strain DSM 13941 / HLO8).